Here is a 929-residue protein sequence, read N- to C-terminus: Bifunctional glutamine synthetase adenylyltransferase/adenylyl-removing enzyme (929 aa).

Residues 1–423 (MSTPIDSSRA…RHFEQIFAAR (423 aa)) form an adenylyl removase region. An adenylyl transferase region spans residues 433 to 929 (ARIRPEQSGD…FQLWEDIFGT (497 aa)).

This sequence belongs to the GlnE family. It depends on Mg(2+) as a cofactor.

The enzyme catalyses [glutamine synthetase]-O(4)-(5'-adenylyl)-L-tyrosine + phosphate = [glutamine synthetase]-L-tyrosine + ADP. It catalyses the reaction [glutamine synthetase]-L-tyrosine + ATP = [glutamine synthetase]-O(4)-(5'-adenylyl)-L-tyrosine + diphosphate. In terms of biological role, involved in the regulation of glutamine synthetase GlnA, a key enzyme in the process to assimilate ammonia. When cellular nitrogen levels are high, the C-terminal adenylyl transferase (AT) inactivates GlnA by covalent transfer of an adenylyl group from ATP to specific tyrosine residue of GlnA, thus reducing its activity. Conversely, when nitrogen levels are low, the N-terminal adenylyl removase (AR) activates GlnA by removing the adenylyl group by phosphorolysis, increasing its activity. The regulatory region of GlnE binds the signal transduction protein PII (GlnB) which indicates the nitrogen status of the cell. The chain is Bifunctional glutamine synthetase adenylyltransferase/adenylyl-removing enzyme from Nitrosomonas europaea (strain ATCC 19718 / CIP 103999 / KCTC 2705 / NBRC 14298).